Reading from the N-terminus, the 250-residue chain is Triosephosphate isomerase (250 aa).

Position 9-11 (9-11 (NWK)) interacts with substrate. His95 (electrophile) is an active-site residue. Glu167 (proton acceptor) is an active-site residue. Residues Gly173, Ser213, and 234–235 (GG) contribute to the substrate site.

It belongs to the triosephosphate isomerase family. In terms of assembly, homodimer.

The protein localises to the cytoplasm. It catalyses the reaction D-glyceraldehyde 3-phosphate = dihydroxyacetone phosphate. It participates in carbohydrate biosynthesis; gluconeogenesis. Its pathway is carbohydrate degradation; glycolysis; D-glyceraldehyde 3-phosphate from glycerone phosphate: step 1/1. In terms of biological role, involved in the gluconeogenesis. Catalyzes stereospecifically the conversion of dihydroxyacetone phosphate (DHAP) to D-glyceraldehyde-3-phosphate (G3P). The polypeptide is Triosephosphate isomerase (Exiguobacterium sibiricum (strain DSM 17290 / CCUG 55495 / CIP 109462 / JCM 13490 / 255-15)).